A 2779-amino-acid chain; its full sequence is MAEDSGALESSYDFSIVQPDDHEYGEADIRLAGSSNDLSSLQNVSASTTRGTKGKGRLDSLKENLYKQQERLTALKERALRKSQDERHKSSMSDSMESLKTLGQKLTVLKTRSGDSSTPLVSPTKDSDPGDVSLLQTSGSEKLLMLTQRTEQNRALLEQRKRDLAKSLLSVKSNIGHQTTAELGSSMTDLRHAASVSNPPVSRHRSALDLEAQGQEAVDESRVKLLRSRMKLTELKQGRQEQELNELRTELAKRAKLIERLELSGAELQRTLTQRNEELEQLRVVQAEEDSLKVQENSRLQGEVLVLRERLAELENVNDLLETTRCELQEELTTARERQRNLELEQEQEKASRSPQSEAAHTDAQVSAELAKQLQELTNQLADLQATNEELRQQVAAQAKLQVTDEIVSQRLEELEATIAAQLLELQEQKSAMAAQNEELAEKTTELNVLNVNLRLLEEKLAQSSRSKPLFLEDHSEDSAASKQMQEDLQQLKLKLDETNKANIKLKLKCKQAEKKLQKFQSQDGQQQLASLLADNEELQQRIAVLEDEKGQWQLANMQEDDRQPEQSTESNNPLQLETIRLLEEQKLELQQALEALLSSSSSAESIEIVERHHLECLGQRRPASEGDAQEQKQVHPPGPSHVSELTQTEQTEEEDSSGETLSQLRERLELFTQERGEVLDKLEQLSAENLQLQARLEESSSSLQLLQREREKDLISSTSTSSNLSQELSSMQRSSEVVATLDAGEGGPVLFEKCEKSLSKLNSELEAYRKANDRQAKFNVSKKLAKEAKNCHTQLSELLHKVKEASTAVETVTVVETVVAVTAPNGKALAEYEQLNAQNAELKAVISRLRQELDELRESYPETEAPLAIVGSDSQREDEILQLQSQLEDARSLQAEQRQQIEEQVDQIKELRQTEAEQLQLVARQSAEITQLQLQSEQFDQLLNSKEMSHEKQLEQQTRIRRELEARAESLEGELSILQTLVAEQKQQLIESVSESEHALNLKMLELQSAQEELRELRAKEDPDQLREALRVSKSLVAQQVRELTSSQETVDALNQQIQEYQGLEHAHKEEQFKNRELREKLKKYALNLKKRTQDNADLEQKVQELTSQLQEQQELVKQKEEVEREPIVDNHRVEQLQQQVSKLNEDLKAKIHLNLENRDALRQLKQQIQEQEQLIQERDAELQDANLVSKELRRERQEADQEVFQLGQENSRLREEISKLQEEIHNLGQRVNEEPTAVEDLRRQLEAKSKKFEKSKELIKLRNATIQSLQRELQQLQQDQDSEVEHVRNARAAHEQLRLEKDAEITALRQEILKLERSRAAGEGDDTITKTSHQLLESQSQQQAESLQVAERELQQLRVQLTAAQEQHALLAQQYASDKANFEMTIARLETLHEGIQAKLQEDASYIESLEAQNTELQARSAALEEQAASQANQQAASQDKVQILEQQLKEQREQEEQKRQQDQQLQERFYELGQREQAQSRQLELLTSEAEESRQQLAGLRTEYESLLAKHSQLTATAQAEREQMSSHSQEELAELRQQLDVKEADLHRQRQVYDAKLAAKATELDELECDLNSHVERAAAETRELCQQLERSQELVAQRTEELQRLNEEFQEVERERSTLSREVTLLRLQHDSAEQDVLELQELRMQAMQDKTEMDNLRTQIDALCANHSQELQALQQRIAELDTLGQNQTDDQVYIETENKRLAEQLSELQAQLARQQHQQQQQQHHHPAVQSQQHPPPASLFFGGDALAAPSPFDEIAQPLRVSSLAASAPPPISPPPTIEDLQRNVSDLEKHAQDLETKLLARNQNLAEQEERRLQLEQRLSEVERLLSERTQQLADIQTANEERDRLAALEKLIQPAAAPTLDMFFGGQAEETVPDAVSHHLDLGLPQTEPVVEPLIQPKKAYLCQPKQEIQEQTAQTIDWGVDEDPWASAANEAPQTDVEHLHTRIAQLELQLSNAEQQKTELQTKAAKLMKRLKEYKTKATTTATPTVTVDNDLDSTIIEELKHQLQLQESRLSKAEEISQQHALEKEKLAKRIDVLTAGNDRMAEMKERQDMDVQMYQARIRELQEKLSQLDQWGEPAATVSSSLDGDEAARIESLQQEIQQLRQQVSELEDERTRDQAELGALRQSSQGYDEAEDNQKLELQQLRQQESELEALRTRDQSELEALRQSCQGHDETVRIATLQQDNQQLELQQLRQAIIELETLRARDQTELEALRQSSQGHDEAARIAIEQRDNQQLELQQLRQQLIELEALRARDQAELEALRQSCQGQQLSVDMASRNDEQMAQLQEKESEIVHLKQRIEELMREDQTEKLVFEILTKNQELQLLRMQVKQLEEDKEDQQVSAAPPKDDGETVEKLKSLCQQLQQEKSDMEEELRVLNNHVLSSLELEDRMKQTLLQLDTKNIEITELRRSLEILQSQNLGQNSAAEQIPDLSAINQQWEQLVEQKCGEVASIWQEHLSQREAAFKAQLEEVTQQQQRELPQSQQSTQGEATSDIMQKMQKALETQEMEIVTLKEQLAIRSAEYARLAAQYDPFRLQNRGGASGGNPASTTVSAGGPPSLTANEPLPEYVLKADLDYALMMLHQRDMRVEEMIVELVQLLEERDHLQLKLSDTLRQLETERSRVSDEPSATASSSAASSSSPSKISSAGSNSELLGTTSAAGSDLKQKLAELQTVKHSKDKVIVDEREQRLQQMLQLQKDMAKQGSGSQSGAGAVAAVAAPTSAAPTAIGVDLSQSGLRSPSMMLMDWILGNNNKEEEAGHQTTG.

3 disordered regions span residues 31-62 (LAGSSNDLSSLQNVSASTTRGTKGKGRLDSLK), 79-98 (ALRKSQDERHKSSMSDSMES), and 110-135 (KTRSGDSSTPLVSPTKDSDPGDVSLL). The segment covering 33–51 (GSSNDLSSLQNVSASTTRG) has biased composition (polar residues). Phosphoserine is present on residues Ser-34 and Ser-35. Residues 52 to 85 (TKGKGRLDSLKENLYKQQERLTALKERALRKSQD) adopt a coiled-coil conformation. The span at 79–91 (ALRKSQDERHKSS) shows a compositional bias: basic and acidic residues. Residues Ser-95, Ser-98, Ser-122, and Ser-133 each carry the phosphoserine modification. Positions 141-175 (EKLLMLTQRTEQNRALLEQRKRDLAKSLLSVKSNI) form a coiled coil. Residues Ser-186, Ser-352, and Ser-354 each carry the phosphoserine modification. 2 coiled-coil regions span residues 220–607 (ESRV…AESI) and 659–716 (GETL…KDLI). The span at 337–352 (ERQRNLELEQEQEKAS) shows a compositional bias: basic and acidic residues. Disordered stretches follow at residues 337–366 (ERQRNLELEQEQEKASRSPQSEAAHTDAQV), 622–662 (RPAS…GETL), 711–730 (REKDLISSTSTSSNLSQELS), and 1716–1753 (QAQLARQQHQQQQQQHHHPAVQSQQHPPPASLFFGGDA). 2 stretches are compositionally biased toward low complexity: residues 717 to 730 (SSTSTSSNLSQELS) and 1716 to 1740 (QAQLARQQHQQQQQQHHHPAVQSQQ). Coiled coils occupy residues 751-1733 (LFEK…QHHH), 1785-1863 (TIED…KLIQ), and 1941-2433 (NEAP…QSQN). Disordered regions lie at residues 2348-2367 (EDKEDQQVSAAPPKDDGETV), 2484-2507 (EEVTQQQQRELPQSQQSTQGEATS), 2552-2578 (NRGGASGGNPASTTVSAGGPPSLTANE), and 2633-2665 (TERSRVSDEPSATASSSAASSSSPSKISSAGSN). Positions 2488–2502 (QQQQRELPQSQQSTQ) are enriched in low complexity. Residues 2504–2544 (EATSDIMQKMQKALETQEMEIVTLKEQLAIRSAEYARLAAQ) are a coiled coil. Positions 2600–2641 (DMRVEEMIVELVQLLEERDHLQLKLSDTLRQLETERSRVSDE) form a coiled coil. Over residues 2643-2665 (SATASSSAASSSSPSKISSAGSN) the composition is skewed to low complexity.

In terms of assembly, interacts with CLIP-190 and spectrin separately.

It localises to the golgi apparatus. The protein localises to the cytoplasmic vesicle. Its subcellular location is the autophagosome. Lva and spectrin may form a Golgi-based scaffold that mediates interaction of Golgi bodies with microtubules and facilitates Golgi-derived membrane secretion required for the formation of furrows during cellularization. Under starvation conditions recruited by ema to developing autophagsosomes where it may function in autophagosome growth. The chain is Protein lava lamp (lva) from Drosophila melanogaster (Fruit fly).